The sequence spans 248 residues: 5'-nucleotidase SurE (248 aa).

A divalent metal cation contacts are provided by D8, D9, S39, and N91.

It belongs to the SurE nucleotidase family. The cofactor is a divalent metal cation.

The protein resides in the cytoplasm. The catalysed reaction is a ribonucleoside 5'-phosphate + H2O = a ribonucleoside + phosphate. In terms of biological role, nucleotidase that shows phosphatase activity on nucleoside 5'-monophosphates. In Geobacter sp. (strain M21), this protein is 5'-nucleotidase SurE.